Here is a 272-residue protein sequence, read N- to C-terminus: 3-methyl-2-oxobutanoate hydroxymethyltransferase (272 aa).

D54 and D93 together coordinate Mg(2+). Residues 54–55, D93, and K121 each bind 3-methyl-2-oxobutanoate; that span reads DS. E123 contacts Mg(2+). E190 serves as the catalytic Proton acceptor.

This sequence belongs to the PanB family. Homodecamer; pentamer of dimers. Mg(2+) is required as a cofactor.

It is found in the cytoplasm. It catalyses the reaction 3-methyl-2-oxobutanoate + (6R)-5,10-methylene-5,6,7,8-tetrahydrofolate + H2O = 2-dehydropantoate + (6S)-5,6,7,8-tetrahydrofolate. Its pathway is cofactor biosynthesis; (R)-pantothenate biosynthesis; (R)-pantoate from 3-methyl-2-oxobutanoate: step 1/2. Functionally, catalyzes the reversible reaction in which hydroxymethyl group from 5,10-methylenetetrahydrofolate is transferred onto alpha-ketoisovalerate to form ketopantoate. This chain is 3-methyl-2-oxobutanoate hydroxymethyltransferase, found in Janthinobacterium sp. (strain Marseille) (Minibacterium massiliensis).